A 63-amino-acid chain; its full sequence is Large ribosomal subunit protein uL30 (63 aa).

It belongs to the universal ribosomal protein uL30 family. Part of the 50S ribosomal subunit.

The polypeptide is Large ribosomal subunit protein uL30 (Rickettsia akari (strain Hartford)).